A 1040-amino-acid polypeptide reads, in one-letter code: Beta-galactosidase (1040 aa).

Residues Asn111 and Asp210 each contribute to the substrate site. Na(+) is bound at residue Asp210. Residues Glu427, His429, and Glu472 each coordinate Mg(2+). Residues Glu472 and 548-551 (EYAH) contribute to the substrate site. Catalysis depends on Glu472, which acts as the Proton donor. Glu548 acts as the Nucleophile in catalysis. Mg(2+) is bound at residue Asn608. Na(+) is bound by residues Phe612 and Asp615. Positions 615 and 1016 each coordinate substrate.

It belongs to the glycosyl hydrolase 2 family. In terms of assembly, homotetramer. It depends on Mg(2+) as a cofactor. Requires Na(+) as cofactor.

The catalysed reaction is Hydrolysis of terminal non-reducing beta-D-galactose residues in beta-D-galactosides.. This Pectobacterium atrosepticum (strain SCRI 1043 / ATCC BAA-672) (Erwinia carotovora subsp. atroseptica) protein is Beta-galactosidase.